Reading from the N-terminus, the 209-residue chain is uncharacterized protein (209 aa).

4Fe-4S ferredoxin-type domains lie at 38 to 67 (KTKP…IFSF), 63 to 92 (KIFS…KDRF), 90 to 119 (DRFT…KEIP), 122 to 151 (KTPV…EINP), 145 to 174 (INKE…TPDE), and 179 to 209 (LIVK…HRES). Residues Cys-47, Cys-50, Cys-53, Cys-57, Cys-72, Cys-75, Cys-78, Cys-82, Cys-99, Cys-102, Cys-105, and Cys-109 each coordinate [4Fe-4S] cluster. [4Fe-4S] cluster-binding residues include Cys-154, Cys-157, Cys-160, Cys-164, Cys-188, Cys-191, Cys-194, and Cys-198.

This is an uncharacterized protein from Methanocaldococcus jannaschii (strain ATCC 43067 / DSM 2661 / JAL-1 / JCM 10045 / NBRC 100440) (Methanococcus jannaschii).